A 617-amino-acid polypeptide reads, in one-letter code: Proline--tRNA ligase (617 aa).

The protein belongs to the class-II aminoacyl-tRNA synthetase family. ProS type 1 subfamily. In terms of assembly, homodimer.

Its subcellular location is the cytoplasm. It carries out the reaction tRNA(Pro) + L-proline + ATP = L-prolyl-tRNA(Pro) + AMP + diphosphate. Functionally, catalyzes the attachment of proline to tRNA(Pro) in a two-step reaction: proline is first activated by ATP to form Pro-AMP and then transferred to the acceptor end of tRNA(Pro). As ProRS can inadvertently accommodate and process non-cognate amino acids such as alanine and cysteine, to avoid such errors it has two additional distinct editing activities against alanine. One activity is designated as 'pretransfer' editing and involves the tRNA(Pro)-independent hydrolysis of activated Ala-AMP. The other activity is designated 'posttransfer' editing and involves deacylation of mischarged Ala-tRNA(Pro). The misacylated Cys-tRNA(Pro) is not edited by ProRS. The sequence is that of Proline--tRNA ligase from Streptococcus pneumoniae (strain ATCC BAA-255 / R6).